Consider the following 299-residue polypeptide: GTPase Era (299 aa).

Positions 4–171 (KSGFVAILGR…ISLLTDNLEE (168 aa)) constitute an Era-type G domain. The tract at residues 12–19 (GRPNVGKS) is G1. 12-19 (GRPNVGKS) contacts GTP. The tract at residues 38–42 (QTTRN) is G2. The interval 59–62 (DTPG) is G3. GTP contacts are provided by residues 59–63 (DTPGI) and 121–124 (NKID). The segment at 121 to 124 (NKID) is G4. Positions 150 to 152 (ISA) are G5. Residues 202–280 (TQQEIPHSVA…YLETWVKVKK (79 aa)) form the KH type-2 domain.

The protein belongs to the TRAFAC class TrmE-Era-EngA-EngB-Septin-like GTPase superfamily. Era GTPase family. As to quaternary structure, monomer.

The protein resides in the cytoplasm. The protein localises to the cell membrane. Its function is as follows. An essential GTPase that binds both GDP and GTP, with rapid nucleotide exchange. Plays a role in 16S rRNA processing and 30S ribosomal subunit biogenesis and possibly also in cell cycle regulation and energy metabolism. This chain is GTPase Era, found in Streptococcus uberis (strain ATCC BAA-854 / 0140J).